A 163-amino-acid chain; its full sequence is Cyclic pyranopterin monophosphate synthase (163 aa).

Substrate contacts are provided by residues 75–77 (LCH) and 113–114 (ME). The active site involves Asp128.

This sequence belongs to the MoaC family. In terms of assembly, homohexamer; trimer of dimers.

The catalysed reaction is (8S)-3',8-cyclo-7,8-dihydroguanosine 5'-triphosphate = cyclic pyranopterin phosphate + diphosphate. It participates in cofactor biosynthesis; molybdopterin biosynthesis. In terms of biological role, catalyzes the conversion of (8S)-3',8-cyclo-7,8-dihydroguanosine 5'-triphosphate to cyclic pyranopterin monophosphate (cPMP). This Magnetococcus marinus (strain ATCC BAA-1437 / JCM 17883 / MC-1) protein is Cyclic pyranopterin monophosphate synthase.